The chain runs to 120 residues: Chaperonin GroEL (120 aa).

23–27 (DGTTT) lines the ATP pocket.

Belongs to the chaperonin (HSP60) family. Forms a cylinder of 14 subunits composed of two heptameric rings stacked back-to-back. Interacts with the co-chaperonin GroES.

It is found in the cytoplasm. It carries out the reaction ATP + H2O + a folded polypeptide = ADP + phosphate + an unfolded polypeptide.. In terms of biological role, together with its co-chaperonin GroES, plays an essential role in assisting protein folding. The GroEL-GroES system forms a nano-cage that allows encapsulation of the non-native substrate proteins and provides a physical environment optimized to promote and accelerate protein folding. The chain is Chaperonin GroEL from Mycolicibacterium fallax (Mycobacterium fallax).